We begin with the raw amino-acid sequence, 716 residues long: ATP-dependent DNA helicase DinG (716 aa).

The Helicase ATP-binding domain maps to 17-294 (ALQEQIPDFI…TCMEQFRPKT (278 aa)). 54-61 (APTGVGKT) provides a ligand contact to ATP. Cys120 is a binding site for [4Fe-4S] cluster. The DEAH box signature appears at 131-134 (EPTQ). [4Fe-4S] cluster is bound by residues Cys194, Cys199, and Cys205. The short motif at 248 to 251 (DEGH) is the DEAH box element. The Helicase C-terminal domain occupies 517 to 698 (HIAEMAAFFR…VFPIEQPEVP (182 aa)).

Belongs to the helicase family. DinG subfamily. Type 1 sub-subfamily. The cofactor is [4Fe-4S] cluster.

It catalyses the reaction Couples ATP hydrolysis with the unwinding of duplex DNA at the replication fork by translocating in the 5'-3' direction. This creates two antiparallel DNA single strands (ssDNA). The leading ssDNA polymer is the template for DNA polymerase III holoenzyme which synthesizes a continuous strand.. The enzyme catalyses ATP + H2O = ADP + phosphate + H(+). DNA-dependent ATPase and 5'-3' DNA helicase. Unwinds D-loops, R-loops, forked DNA and G-quadruplex DNA. The polypeptide is ATP-dependent DNA helicase DinG (Escherichia coli O6:H1 (strain CFT073 / ATCC 700928 / UPEC)).